Reading from the N-terminus, the 356-residue chain is DNA polymerase IV (356 aa).

The region spanning 6-186 (IVHIDMDAFY…LPVDAFHGIG (181 aa)) is the UmuC domain. Mg(2+)-binding residues include Asp10 and Asp104. Glu105 is an active-site residue.

Belongs to the DNA polymerase type-Y family. In terms of assembly, monomer. Mg(2+) serves as cofactor.

It localises to the cytoplasm. It carries out the reaction DNA(n) + a 2'-deoxyribonucleoside 5'-triphosphate = DNA(n+1) + diphosphate. Its function is as follows. Poorly processive, error-prone DNA polymerase involved in untargeted mutagenesis. Copies undamaged DNA at stalled replication forks, which arise in vivo from mismatched or misaligned primer ends. These misaligned primers can be extended by PolIV. Exhibits no 3'-5' exonuclease (proofreading) activity. May be involved in translesional synthesis, in conjunction with the beta clamp from PolIII. This chain is DNA polymerase IV, found in Gluconobacter oxydans (strain 621H) (Gluconobacter suboxydans).